Reading from the N-terminus, the 270-residue chain is UPF0354 protein BPUM_2629 (270 aa).

This sequence belongs to the UPF0354 family.

The sequence is that of UPF0354 protein BPUM_2629 from Bacillus pumilus (strain SAFR-032).